The following is a 344-amino-acid chain: Arginine N-succinyltransferase (344 aa).

Leu125 serves as a coordination point for succinyl-CoA. His229 (proton donor) is an active-site residue.

Belongs to the arginine N-succinyltransferase family.

It catalyses the reaction succinyl-CoA + L-arginine = N(2)-succinyl-L-arginine + CoA + H(+). It participates in amino-acid degradation; L-arginine degradation via AST pathway; L-glutamate and succinate from L-arginine: step 1/5. Functionally, catalyzes the transfer of succinyl-CoA to arginine to produce N(2)-succinylarginine. The sequence is that of Arginine N-succinyltransferase from Escherichia coli O6:K15:H31 (strain 536 / UPEC).